Here is a 493-residue protein sequence, read N- to C-terminus: Probable protein phosphatase 2C 40 (493 aa).

A PPM-type phosphatase domain is found at 145 to 480 (LLSAMEVQVA…DDVTIMVITL (336 aa)). Mn(2+) is bound by residues aspartate 180, glycine 181, aspartate 408, and aspartate 471.

Belongs to the PP2C family. Requires Mg(2+) as cofactor. Mn(2+) is required as a cofactor.

It catalyses the reaction O-phospho-L-seryl-[protein] + H2O = L-seryl-[protein] + phosphate. The catalysed reaction is O-phospho-L-threonyl-[protein] + H2O = L-threonyl-[protein] + phosphate. This is Probable protein phosphatase 2C 40 from Arabidopsis thaliana (Mouse-ear cress).